A 394-amino-acid chain; its full sequence is Phloroisovalerophenone synthase (394 aa).

Residue C166 is part of the active site.

This sequence belongs to the thiolase-like superfamily. Chalcone/stilbene synthases family. Homodimer. In terms of tissue distribution, expressed in lupulin gland. Present at low levels in leaves but accumulates in cones.

It catalyses the reaction 3-methylbutanoyl-CoA + 3 malonyl-CoA + 3 H(+) = phlorisovalerophenone + 3 CO2 + 4 CoA. The catalysed reaction is (E)-4-coumaroyl-CoA + 3 malonyl-CoA + 3 H(+) = 2',4,4',6'-tetrahydroxychalcone + 3 CO2 + 4 CoA. The enzyme catalyses 2-methylpropanoyl-CoA + 3 malonyl-CoA + 3 H(+) = phlorisobutanophenone + 3 CO2 + 4 CoA. The protein operates within secondary metabolite biosynthesis. Involved in the biosynthesis of prenylated phenolics natural products which contribute to the bitter taste of beer and display broad biological activities. Polyketide synthase that can use 3-methylbutanoyl-CoA (isovaleryl-CoA) and 2-methylpropanoyl-CoA (isobutyryl-CoA) as substrates to produce phlorisovalerophenone (PIVP) and phlorisobutyrophenone (2-methyl-1-(2,4,6-trihydroxyphenyl)propan-1-one), respectively, intermediates in the biosynthesis of the bitter acids (alpha and beta) acids. Can also produce naringenin-chalcone (2',4,4',6'-tetrahydroxychalcone) from 4-coumaroyl-CoA with a lower efficiency. This chain is Phloroisovalerophenone synthase, found in Humulus lupulus (European hop).